The sequence spans 241 residues: Uridylate kinase (241 aa).

9 to 10 serves as a coordination point for ATP; it reads GS. Position 44 (G44) interacts with UMP. Residues G45 and R49 each coordinate ATP. Residues D66 and 114 to 120 contribute to the UMP site; that span reads VTPGQTT. T140, Y146, and D149 together coordinate ATP. The disordered stretch occupies residues 222 to 241; sequence TDVIPTGSEEPIYWTGSSDA.

This sequence belongs to the UMP kinase family. Homohexamer.

It localises to the cytoplasm. It catalyses the reaction UMP + ATP = UDP + ADP. The protein operates within pyrimidine metabolism; CTP biosynthesis via de novo pathway; UDP from UMP (UMPK route): step 1/1. With respect to regulation, inhibited by UTP. In terms of biological role, catalyzes the reversible phosphorylation of UMP to UDP. The sequence is that of Uridylate kinase from Halorubrum lacusprofundi (strain ATCC 49239 / DSM 5036 / JCM 8891 / ACAM 34).